A 1649-amino-acid chain; its full sequence is Formin-like protein 20 (1649 aa).

The region spanning 1–194 (MALFRRFFYK…QYISRRNLGS (194 aa)) is the Phosphatase tensin-type domain. Cys127 acts as the Phosphocysteine intermediate in catalysis. Residues 200-339 (DTPLLLDCLI…FKAEVLFSGA (140 aa)) enclose the C2 tensin-type domain. Disordered stretches follow at residues 416 to 774 (DCAS…PWKS) and 787 to 1245 (STSQ…QKKS). Over residues 421–483 (DSNHKHDMHA…RRTVEAKEND (63 aa)) the composition is skewed to basic and acidic residues. Polar residues-rich tracts occupy residues 500–513 (LESM…SLNK) and 585–597 (RINS…TTSL). Basic and acidic residues predominate over residues 598–616 (KDGKRATSPDGVIPKDAKT). Positions 648 to 662 (SLPPASPHQAPPPLP) are enriched in pro residues. The span at 665–678 (TSEAKTVLHSSQAV) shows a compositional bias: polar residues. Pro residues-rich tracts occupy residues 680–691 (SPPPPPPPPPLP), 701–711 (LPPPPPPPPPF), 722–732 (LPPPPPPPPPF), 743–752 (LPPPPPPPLP), and 795–804 (SPTPPPPPPA). Residues 809 to 820 (GQKSSDLQTSQL) are compositionally biased toward polar residues. Pro residues-rich tracts occupy residues 821–832 (PSPPPPPPPPPF), 843–854 (LPPPPPPPPPPF), and 865–874 (LPPPPPPPPW). The segment covering 878 to 890 (YASTFETHEACST) has biased composition (polar residues). 3 stretches are compositionally biased toward pro residues: residues 893–904 (SPPPPPPPPPFS), 944–960 (PSPP…PPPF), and 968–1213 (SPPP…PPPM). An FH2 domain is found at 1237 to 1635 (FGSAAQKKSS…KALKEAEMEK (399 aa)).

This sequence belongs to the formin-like family. Class-II subfamily.

The sequence is that of Formin-like protein 20 (FH20) from Arabidopsis thaliana (Mouse-ear cress).